Here is a 247-residue protein sequence, read N- to C-terminus: ATP synthase subunit a, chloroplastic (247 aa).

5 helical membrane-spanning segments follow: residues 38–58 (QVLI…IIAV), 95–115 (VPFI…GALL), 134–154 (INTT…AGLT), 199–219 (LVVV…VMFL), and 220–240 (GLFT…AYIG).

The protein belongs to the ATPase A chain family. In terms of assembly, F-type ATPases have 2 components, CF(1) - the catalytic core - and CF(0) - the membrane proton channel. CF(1) has five subunits: alpha(3), beta(3), gamma(1), delta(1), epsilon(1). CF(0) has four main subunits: a, b, b' and c.

The protein localises to the plastid. It localises to the chloroplast thylakoid membrane. Key component of the proton channel; it plays a direct role in the translocation of protons across the membrane. The sequence is that of ATP synthase subunit a, chloroplastic from Morus indica (Mulberry).